Consider the following 229-residue polypeptide: Secreted RxLR effector protein PITG_22926 (229 aa).

An N-terminal signal peptide occupies residues methionine 1–serine 23. The RxLR-dEER motif lies at proline 34–arginine 45.

The protein belongs to the RxLR effector family.

The protein localises to the secreted. It is found in the host nucleus. Its function is as follows. Secreted effector that acts as a RNA silencing suppressor, probably by inhibiting the biogenesis of small RNAs in the host plant, to manipulate host immune responses and promote Phytophthora infection. The protein is Secreted RxLR effector protein PITG_22926 of Phytophthora infestans (strain T30-4) (Potato late blight agent).